Consider the following 359-residue polypeptide: MAISTLKTGRIAIIGASGYGGLQLVKLINEHPDFEISTLNGERSVGKNWNEINPFMKILGDKKITKSNIDEIALDSDYAILSLPNGLSSQLTPLLLKKGVKVLDLSADYRFKSLDKWKEVYTKEAAKYKRYDYDLCEEAIYGFSEEFSSEISKSRLIACPGCYPTASLSLLIPFLKQGLIESEGIIIDAKSGTSGGGRNPSEQLLLSECSESIRPYGVIGHRHTAEIESIASHFAGHQVNLQFTPHLVPMVRGILSTVYARLRDPGLTAEDCKIVIEAFYKDQPFIDILPVGTYPATKWVKNTNKVMISVEVDKRNGRIVLMSVIDNLLKGQAGQAIQNLNIMHGLESDIGLPKITFYP.

Cysteine 162 is a catalytic residue.

This sequence belongs to the NAGSA dehydrogenase family. Type 1 subfamily.

It is found in the cytoplasm. The enzyme catalyses N-acetyl-L-glutamate 5-semialdehyde + phosphate + NADP(+) = N-acetyl-L-glutamyl 5-phosphate + NADPH + H(+). It participates in amino-acid biosynthesis; L-arginine biosynthesis; N(2)-acetyl-L-ornithine from L-glutamate: step 3/4. Functionally, catalyzes the NADPH-dependent reduction of N-acetyl-5-glutamyl phosphate to yield N-acetyl-L-glutamate 5-semialdehyde. The protein is N-acetyl-gamma-glutamyl-phosphate reductase of Prochlorococcus marinus (strain NATL2A).